A 739-amino-acid polypeptide reads, in one-letter code: Eukaryotic translation initiation factor 3 subunit B (739 aa).

In terms of domain architecture, RRM spans 39–125 (AFVVIDGLPV…HTLAVNKLTD (87 aa)). 5 WD repeats span residues 191-229 (RDHW…KQKQ), 231-288 (PHPF…RSFV), 457-498 (SLKD…SFFA), 516-559 (IEKK…EKPE), and 574-612 (NEHF…HTFS).

This sequence belongs to the eIF-3 subunit B family. As to quaternary structure, component of the eukaryotic translation initiation factor 3 (eIF-3) complex.

It localises to the cytoplasm. RNA-binding component of the eukaryotic translation initiation factor 3 (eIF-3) complex, which is involved in protein synthesis of a specialized repertoire of mRNAs and, together with other initiation factors, stimulates binding of mRNA and methionyl-tRNAi to the 40S ribosome. The eIF-3 complex specifically targets and initiates translation of a subset of mRNAs involved in cell proliferation. This Coccidioides immitis (strain RS) (Valley fever fungus) protein is Eukaryotic translation initiation factor 3 subunit B.